The sequence spans 253 residues: Chitooligosaccharide deacetylase (253 aa).

Residues H61 and H126 each contribute to the Mg(2+) site.

It belongs to the YdjC deacetylase family. ChbG subfamily. In terms of assembly, homodimer. Mg(2+) serves as cofactor.

Its subcellular location is the cytoplasm. The enzyme catalyses N,N'-diacetylchitobiose + H2O = N-acetyl-beta-D-glucosaminyl-(1-&gt;4)-D-glucosamine + acetate. The catalysed reaction is diacetylchitobiose-6'-phosphate + H2O = N'-monoacetylchitobiose-6'-phosphate + acetate. It functions in the pathway glycan degradation; chitin degradation. In terms of biological role, involved in the degradation of chitin. ChbG is essential for growth on the acetylated chitooligosaccharides chitobiose and chitotriose but is dispensable for growth on cellobiose and chitosan dimer, the deacetylated form of chitobiose. Deacetylation of chitobiose-6-P and chitotriose-6-P is necessary for both the activation of the chb promoter by the regulatory protein ChbR and the hydrolysis of phosphorylated beta-glucosides by the phospho-beta-glucosidase ChbF. Catalyzes the removal of only one acetyl group from chitobiose-6-P to yield monoacetylchitobiose-6-P, the inducer of ChbR and the substrate of ChbF. The polypeptide is Chitooligosaccharide deacetylase (Serratia marcescens).